Here is a 463-residue protein sequence, read N- to C-terminus: L-seryl-tRNA(Sec) selenium transferase (463 aa).

Lysine 295 carries the post-translational modification N6-(pyridoxal phosphate)lysine.

This sequence belongs to the SelA family. In terms of assembly, homodecamer; pentamer of dimers. Binds only one seryl-tRNA(Sec) per dimer. Pyridoxal 5'-phosphate serves as cofactor.

It localises to the cytoplasm. It carries out the reaction L-seryl-tRNA(Sec) + selenophosphate + H(+) = L-selenocysteinyl-tRNA(Sec) + phosphate. The protein operates within aminoacyl-tRNA biosynthesis; selenocysteinyl-tRNA(Sec) biosynthesis; selenocysteinyl-tRNA(Sec) from L-seryl-tRNA(Sec) (bacterial route): step 1/1. Its function is as follows. Converts seryl-tRNA(Sec) to selenocysteinyl-tRNA(Sec) required for selenoprotein biosynthesis. The sequence is that of L-seryl-tRNA(Sec) selenium transferase from Shigella flexneri.